A 263-amino-acid polypeptide reads, in one-letter code: Methylesterase 18 (263 aa).

The active-site Acyl-ester intermediate is the S80. Catalysis depends on charge relay system residues D212 and H240.

This sequence belongs to the AB hydrolase superfamily. Methylesterase family.

The catalysed reaction is methyl (indol-3-yl)acetate + H2O = (indol-3-yl)acetate + methanol + H(+). It functions in the pathway plant hormone biosynthesis. Functionally, methylesterase shown to have methyl indole-3-acetic acid (MeIAA) esterase activity in vitro. This chain is Methylesterase 18, found in Arabidopsis thaliana (Mouse-ear cress).